Consider the following 226-residue polypeptide: ATP synthase F(0) complex subunit a (226 aa).

Helical transmembrane passes span 12 to 32, 68 to 88, 97 to 117, 138 to 158, 164 to 184, and 200 to 222; these read PTMM…ILFP, WALM…LGLL, QLSM…ITGF, IPML…ALAV, ITAG…LMNI, and TILE…SLYL.

Belongs to the ATPase A chain family. In terms of assembly, component of the ATP synthase complex composed at least of ATP5F1A/subunit alpha, ATP5F1B/subunit beta, ATP5MC1/subunit c (homooctomer), MT-ATP6/subunit a, MT-ATP8/subunit 8, ATP5ME/subunit e, ATP5MF/subunit f, ATP5MG/subunit g, ATP5MK/subunit k, ATP5MJ/subunit j, ATP5F1C/subunit gamma, ATP5F1D/subunit delta, ATP5F1E/subunit epsilon, ATP5PF/subunit F6, ATP5PB/subunit b, ATP5PD/subunit d, ATP5PO/subunit OSCP. ATP synthase complex consists of a soluble F(1) head domain (subunits alpha(3) and beta(3)) - the catalytic core - and a membrane F(0) domain - the membrane proton channel (subunits c, a, 8, e, f, g, k and j). These two domains are linked by a central stalk (subunits gamma, delta, and epsilon) rotating inside the F1 region and a stationary peripheral stalk (subunits F6, b, d, and OSCP). Interacts with DNAJC30; interaction is direct.

It is found in the mitochondrion inner membrane. The enzyme catalyses H(+)(in) = H(+)(out). Functionally, subunit a, of the mitochondrial membrane ATP synthase complex (F(1)F(0) ATP synthase or Complex V) that produces ATP from ADP in the presence of a proton gradient across the membrane which is generated by electron transport complexes of the respiratory chain. ATP synthase complex consist of a soluble F(1) head domain - the catalytic core - and a membrane F(1) domain - the membrane proton channel. These two domains are linked by a central stalk rotating inside the F(1) region and a stationary peripheral stalk. During catalysis, ATP synthesis in the catalytic domain of F(1) is coupled via a rotary mechanism of the central stalk subunits to proton translocation. With the subunit c (ATP5MC1), forms the proton-conducting channel in the F(0) domain, that contains two crucial half-channels (inlet and outlet) that facilitate proton movement from the mitochondrial intermembrane space (IMS) into the matrix. Protons are taken up via the inlet half-channel and released through the outlet half-channel, following a Grotthuss mechanism. The sequence is that of ATP synthase F(0) complex subunit a from Felis catus (Cat).